The primary structure comprises 238 residues: 3-deoxy-D-manno-octulosonic acid kinase (238 aa).

The active site involves aspartate 167.

It belongs to the protein kinase superfamily. KdkA/RfaP family.

Its subcellular location is the cell inner membrane. The enzyme catalyses an alpha-Kdo-(2-&gt;6)-lipid IVA + ATP = a 4-O-phospho-alpha-Kdo-(2-&gt;6)-lipid IVA + ADP + H(+). It participates in bacterial outer membrane biogenesis; LPS core biosynthesis. Catalyzes the ATP-dependent phosphorylation of the 3-deoxy-D-manno-octulosonic acid (Kdo) residue in Kdo-lipid IV(A) at the 4-OH position. The sequence is that of 3-deoxy-D-manno-octulosonic acid kinase from Vibrio parahaemolyticus serotype O3:K6 (strain RIMD 2210633).